A 147-amino-acid chain; its full sequence is Transcriptional repressor NrdR (147 aa).

A zinc finger lies at 3–34 (CPFCGHEDTQVAETRESDEGDVIRRRRRCPSC). Residues 49-139 (PAIVKKDGSR…VYRSFEGVDE (91 aa)) form the ATP-cone domain.

Belongs to the NrdR family. Zn(2+) is required as a cofactor.

Its function is as follows. Negatively regulates transcription of bacterial ribonucleotide reductase nrd genes and operons by binding to NrdR-boxes. The sequence is that of Transcriptional repressor NrdR from Methylibium petroleiphilum (strain ATCC BAA-1232 / LMG 22953 / PM1).